A 321-amino-acid chain; its full sequence is Torsin-2A (321 aa).

A signal peptide spans 1–26 (MAVARHGYRPWGSILGLLGLALAAAA). 93–100 (GWTGTGKS) is a binding site for ATP. Asn-149 carries N-linked (GlcNAc...) asparagine glycosylation.

It belongs to the ClpA/ClpB family. Torsin subfamily. In terms of assembly, homohexamer. Interacts with TOR1AIP1. Post-translationally, N-glycosylated. Expressed at similar levels in liver, muscle and brain (at protein level).

It is found in the endoplasmic reticulum lumen. In Mus musculus (Mouse), this protein is Torsin-2A (Tor2a).